A 149-amino-acid chain; its full sequence is Golgi apparatus membrane protein tvp-18 (149 aa).

N-linked (GlcNAc...) asparagine glycosylation is present at Asn11. The next 4 helical transmembrane spans lie at 18 to 38 (WLGI…IFTF), 41 to 61 (IIIV…FVEV), 84 to 103 (NYTR…LSCI), and 108 to 128 (SLLV…LAAL).

The protein belongs to the TVP18 family.

It is found in the golgi apparatus membrane. In terms of biological role, golgi membrane protein involved in vesicular trafficking. The chain is Golgi apparatus membrane protein tvp-18 (tvp-18) from Neurospora crassa (strain ATCC 24698 / 74-OR23-1A / CBS 708.71 / DSM 1257 / FGSC 987).